The primary structure comprises 590 residues: Aspartate--tRNA(Asp/Asn) ligase (590 aa).

Residue glutamate 173 coordinates L-aspartate. An aspartate region spans residues 197-200; the sequence is QIFK. Arginine 219 contributes to the L-aspartate binding site. ATP contacts are provided by residues 219–221 and glutamine 228; that span reads RDE. Residue histidine 450 coordinates L-aspartate. Glutamate 484 is an ATP binding site. Arginine 491 lines the L-aspartate pocket. 536–539 is an ATP binding site; sequence GLDR.

The protein belongs to the class-II aminoacyl-tRNA synthetase family. Type 1 subfamily. Homodimer.

The protein localises to the cytoplasm. The enzyme catalyses tRNA(Asx) + L-aspartate + ATP = L-aspartyl-tRNA(Asx) + AMP + diphosphate. In terms of biological role, aspartyl-tRNA synthetase with relaxed tRNA specificity since it is able to aspartylate not only its cognate tRNA(Asp) but also tRNA(Asn). Reaction proceeds in two steps: L-aspartate is first activated by ATP to form Asp-AMP and then transferred to the acceptor end of tRNA(Asp/Asn). This chain is Aspartate--tRNA(Asp/Asn) ligase, found in Coxiella burnetii (strain RSA 331 / Henzerling II).